A 133-amino-acid polypeptide reads, in one-letter code: Holo-[acyl-carrier-protein] synthase (133 aa).

The Mg(2+) site is built by Asp-8 and Glu-56.

It belongs to the P-Pant transferase superfamily. AcpS family. Mg(2+) serves as cofactor.

It localises to the cytoplasm. The enzyme catalyses apo-[ACP] + CoA = holo-[ACP] + adenosine 3',5'-bisphosphate + H(+). Its function is as follows. Transfers the 4'-phosphopantetheine moiety from coenzyme A to a Ser of acyl-carrier-protein. The sequence is that of Holo-[acyl-carrier-protein] synthase from Clostridium perfringens (strain 13 / Type A).